A 413-amino-acid polypeptide reads, in one-letter code: Gamma-glutamyl phosphate reductase (413 aa).

This sequence belongs to the gamma-glutamyl phosphate reductase family.

The protein resides in the cytoplasm. The enzyme catalyses L-glutamate 5-semialdehyde + phosphate + NADP(+) = L-glutamyl 5-phosphate + NADPH + H(+). It participates in amino-acid biosynthesis; L-proline biosynthesis; L-glutamate 5-semialdehyde from L-glutamate: step 2/2. Its function is as follows. Catalyzes the NADPH-dependent reduction of L-glutamate 5-phosphate into L-glutamate 5-semialdehyde and phosphate. The product spontaneously undergoes cyclization to form 1-pyrroline-5-carboxylate. In Geobacillus sp. (strain WCH70), this protein is Gamma-glutamyl phosphate reductase.